Here is a 310-residue protein sequence, read N- to C-terminus: Porphobilinogen deaminase (310 aa).

An S-(dipyrrolylmethanemethyl)cysteine modification is found at Cys242.

Belongs to the HMBS family. As to quaternary structure, monomer. It depends on dipyrromethane as a cofactor.

The enzyme catalyses 4 porphobilinogen + H2O = hydroxymethylbilane + 4 NH4(+). It participates in porphyrin-containing compound metabolism; protoporphyrin-IX biosynthesis; coproporphyrinogen-III from 5-aminolevulinate: step 2/4. Tetrapolymerization of the monopyrrole PBG into the hydroxymethylbilane pre-uroporphyrinogen in several discrete steps. This is Porphobilinogen deaminase from Halorhodospira halophila (strain DSM 244 / SL1) (Ectothiorhodospira halophila (strain DSM 244 / SL1)).